The chain runs to 537 residues: Bifunctional purine biosynthesis protein PurH (537 aa).

In terms of domain architecture, MGS-like spans 11-158; the sequence is ADIQRVRRAL…KNHAYVGVIV (148 aa).

This sequence belongs to the PurH family.

The catalysed reaction is (6R)-10-formyltetrahydrofolate + 5-amino-1-(5-phospho-beta-D-ribosyl)imidazole-4-carboxamide = 5-formamido-1-(5-phospho-D-ribosyl)imidazole-4-carboxamide + (6S)-5,6,7,8-tetrahydrofolate. It catalyses the reaction IMP + H2O = 5-formamido-1-(5-phospho-D-ribosyl)imidazole-4-carboxamide. It functions in the pathway purine metabolism; IMP biosynthesis via de novo pathway; 5-formamido-1-(5-phospho-D-ribosyl)imidazole-4-carboxamide from 5-amino-1-(5-phospho-D-ribosyl)imidazole-4-carboxamide (10-formyl THF route): step 1/1. It participates in purine metabolism; IMP biosynthesis via de novo pathway; IMP from 5-formamido-1-(5-phospho-D-ribosyl)imidazole-4-carboxamide: step 1/1. The sequence is that of Bifunctional purine biosynthesis protein PurH from Parvibaculum lavamentivorans (strain DS-1 / DSM 13023 / NCIMB 13966).